Consider the following 375-residue polypeptide: MTSVKLAEKNFEQDKEFAKAMHGDSYKKRGISALMAKAKEASDVATNGYFKHWDGGVSEDDEKKRLDDYSSLTKNYYNLVTDFYEYGWGSSFHFSRYYKGEAFRQATARHEHFLAHKMNINENMRVLDVGCGVGGPGREICRFTDCTIVGLNNNDYQVERAQYYAKKYKLDDKLSYVKGDFMQMDFEPESFDAVYAIEATVHAPVLEGVYSEIYKVLKPGGVFGVYEWVMTDKYDENNEEHRKIAYGIEVGDGIPKMYKREVAEQALKNVGFDIEYEKDLADVNDEIPWYYPLAGEWKYVQTLSDCFTIFRTSKIGRTVTTNVVGLMEKIGLAPKGSKQVTGALEDAAVNLVAGGEQKLFTPMMLYIARKPLDAK.

It belongs to the class I-like SAM-binding methyltransferase superfamily. Erg6/SMT family.

The enzyme catalyses zymosterol + S-adenosyl-L-methionine = fecosterol + S-adenosyl-L-homocysteine + H(+). It participates in steroid metabolism; ergosterol biosynthesis; ergosterol from zymosterol: step 1/5. In terms of biological role, catalyzes the methyl transfer from S-adenosyl-methionine to the C-24 of zymosterol to form fecosterol. The protein is Sterol 24-C-methyltransferase (ERG6) of Clavispora lusitaniae (strain ATCC 42720) (Yeast).